A 458-amino-acid chain; its full sequence is Fumarate hydratase class II 2 (458 aa).

Substrate-binding positions include 98–100, 123–126, 133–135, and Thr181; these read SGT, NPND, and SSN. Catalysis depends on His182, which acts as the Proton donor/acceptor. The active site involves Ser312. Substrate is bound by residues Ser313 and 318 to 320; that span reads KVN.

Belongs to the class-II fumarase/aspartase family. Fumarase subfamily. In terms of assembly, homotetramer.

Its subcellular location is the cytoplasm. It catalyses the reaction (S)-malate = fumarate + H2O. It participates in carbohydrate metabolism; tricarboxylic acid cycle; (S)-malate from fumarate: step 1/1. In terms of biological role, involved in the TCA cycle. Catalyzes the stereospecific interconversion of fumarate to L-malate. This is Fumarate hydratase class II 2 from Pseudomonas aeruginosa (strain ATCC 15692 / DSM 22644 / CIP 104116 / JCM 14847 / LMG 12228 / 1C / PRS 101 / PAO1).